A 352-amino-acid polypeptide reads, in one-letter code: Inorganic triphosphatase (352 aa).

One can recognise a CYTH domain in the interval 6-203; that stretch reads LQEIELKLAI…KRGYLLGSKQ (198 aa).

The enzyme catalyses triphosphate + H2O = phosphate + diphosphate. Functionally, involved in the hydrolysis of the beta-gamma-phosphoanhydride linkage of triphosphate-containing substrates (inorganic or nucleoside-linked). Catalyzes the hydrolysis of inorganic triphosphate (PPPi), which could be cytotoxic because of its high affinity for calcium ion, thereby interfering with calcium signaling. This chain is Inorganic triphosphatase, found in Haemophilus influenzae (strain ATCC 51907 / DSM 11121 / KW20 / Rd).